The primary structure comprises 343 residues: Nod factor export ATP-binding protein I (343 aa).

Residues methionine 1 to serine 14 are compositionally biased toward polar residues. The segment at methionine 1–arginine 38 is disordered. Positions isoleucine 45–tyrosine 275 constitute an ABC transporter domain. Residue glycine 77–serine 84 coordinates ATP.

It belongs to the ABC transporter superfamily. Lipooligosaccharide exporter (TC 3.A.1.102) family. As to quaternary structure, the complex is composed of two ATP-binding proteins (NodI) and two transmembrane proteins (NodJ).

The protein resides in the cell inner membrane. In terms of biological role, part of the ABC transporter complex NodIJ involved in the export of the nodulation factors (Nod factors), the bacterial signal molecules that induce symbiosis and subsequent nodulation induction. Nod factors are LCO (lipo-chitin oligosaccharide), a modified beta-1,4-linked N-acetylglucosamine oligosaccharide. This subunit is responsible for energy coupling to the transport system. The protein is Nod factor export ATP-binding protein I of Sinorhizobium fredii (strain NBRC 101917 / NGR234).